The sequence spans 410 residues: UPF0761 membrane protein Csal_1895 (410 aa).

6 consecutive transmembrane segments (helical) span residues 43-63, 99-119, 139-159, 180-200, 212-232, and 247-267; these read LFAVVPFMTVLYAMLSAIPSF, SLTLIGLMFLLVTAVMMMVTV, FLLYWAVLTLGPLLLGSGFLL, VAFLRLLPLTLSFTAFVFIYM, AVAGAGLAALALELAKGAFSL, and FAAVPLFLVWVFLSWAIVLVG.

Belongs to the UPF0761 family.

It localises to the cell inner membrane. In Chromohalobacter salexigens (strain ATCC BAA-138 / DSM 3043 / CIP 106854 / NCIMB 13768 / 1H11), this protein is UPF0761 membrane protein Csal_1895.